Consider the following 739-residue polypeptide: Nucleoprotein (739 aa).

Residues 334-363 are a coiled coil; that stretch reads VNVGEQYQQLREAATEAEKQLQQYAESREL. 2 disordered regions span residues 414–475 and 498–642; these read RPNL…YHDD and FELQ…IGQS. The segment covering 570–579 has biased composition (acidic residues); that stretch reads TPIDQGDDDP. Residues 614–624 are compositionally biased toward basic and acidic residues; it reads AEAHEPPHKSS. Positions 625–634 are enriched in polar residues; the sequence is NEPAETSQLN.

The protein belongs to the filoviruses nucleoprotein family. As to quaternary structure, homooligomer. Homomultimerizes to form the nucleocapsid. Binds to viral genomic RNA. Interacts with VP35 and VP30 to form the nucleocapsid. Interacts with host PPP2R5C; this interaction leads to VP30 dephosphorylation and viral transcription. Interacts with VP24; this interaction facilitates nucleocapsid assembly and genome packaging. Interacts with matrix protein VP40; this interaction allows recruitment of the nucleocapsid into progeny virions. Interacts with host STAU1. Interacts with host NXF1 (via RNA-binding domain); this interaction recruits NXF1 to the inclusion bodies were viral replication takes place, probably to export viral mRNA-NXF1 complexes from these sites. Interacts with host CCDC92; this interaction sequesters NP in the host cytoplasm. Interacts with host TRIM14. In terms of processing, phosphorylated and O-glycosylated by host. Acetylated by host EP300 in vitro.

The protein localises to the virion. It is found in the host cytoplasm. Oligomerizes into helical capsid to encapsidate the viral genome, protecting it from nucleases and the cellular innate immune response. VP35 binds to and stabilizes monomeric NP, keeping it soluble. Upon virus replication, NP is recruited to bind cooperatively viral genomic RNA and VP35 is released. The encapsidated genomic RNA is termed the nucleocapsid and serves as template for transcription and replication. The nucleocapsid is helical with a pitch of 10.81 NP per turn and a diameter of about 22nm. Each NP binds to six nucleotides of viral genomic RNA, three being exposed to the solvant and three hidden into the nucleocapsid. Also recruits host PPP2R5C phosphatase to dephosphorylate VP30 and thereby promote viral transcription. Upon virion assembly and budding, NP binds to VP24 and possibly host STAU1. The chain is Nucleoprotein (NP) from Homo sapiens (Human).